We begin with the raw amino-acid sequence, 119 residues long: uncharacterized protein (119 aa).

A helical transmembrane segment spans residues 74-91 (LSVHFLLNVISAILSMLI).

The protein localises to the membrane. This is an uncharacterized protein from Schizosaccharomyces pombe (strain 972 / ATCC 24843) (Fission yeast).